Here is a 369-residue protein sequence, read N- to C-terminus: MGEITNVMEYQAIAKQKLPKMIYDYYASGAEDEWTLKENREAFSRILFRPRILIDVSKIDMSATVLGFKISMPIMIAPSAMQKMAHPDGEYATARAASAAGTIMTLSSWATSSVEEVASTGPGIRFFQLYVYKDRNVVEQLVRRAERAGFKAIALTVDTPRLGRREADIKNRFVLPPYLTLKNFEGLDLAEMDKSNDSGLASYVAGQIDRTLSWKDVKWLQSITSLPILVKGVITAEDARLAVHSGAAGIIVSNHGARQLDYVPATISALEEVVTAAAGRIPVYLDGGVRRGTDVFKALALGAAGVFIGRPVVFALAAEGEAGVRNVLRMMREEFELTMALSGCTSLADITRAHIYTDADRLARPFPRL.

The region spanning 1–360 is the FMN hydroxy acid dehydrogenase domain; it reads MGEITNVMEY…TRAHIYTDAD (360 aa). Tyr25 serves as a coordination point for glyoxylate. FMN-binding positions include 78 to 80, Ser107, 128 to 130, and Thr156; these read PSA and QLY. Residue Tyr130 coordinates glyoxylate. Arg165 contributes to the glyoxylate binding site. Positions 231 and 253 each coordinate FMN. Glyoxylate-binding residues include His255 and Arg258. Residue His255 is the Proton acceptor of the active site. FMN contacts are provided by residues 286–290 and 309–310; these read DGGVR and GR. Positions 367 to 369 match the Microbody targeting signal motif; it reads PRL.

The protein belongs to the FMN-dependent alpha-hydroxy acid dehydrogenase family. As to quaternary structure, homotetramer. Interacts with rice dwarf virus (RDV) P8. This interaction promotes viral P8 relocation to virus factories peripheral to peroxisomes. Requires FMN as cofactor.

It localises to the peroxisome. It catalyses the reaction glycolate + O2 = glyoxylate + H2O2. The protein operates within photosynthesis; photorespiration; glycine from 2-phosphoglycolate: step 2/3. Its function is as follows. Catalyzes the oxidation of glycolate to glyoxylate, with a reduction of O2 to H2O2. Is a key enzyme in photorespiration in plants. Can exert a strong regulation over photosynthesis, possibly through a feed-back inhibition on Rubisco activase. Does not seem to play a role in oxalate accumulation. This chain is Glycolate oxidase 1 (GLO1), found in Oryza sativa subsp. indica (Rice).